The chain runs to 734 residues: Photosystem I P700 chlorophyll a apoprotein A2 (734 aa).

8 helical membrane passes run 46-69, 135-158, 175-199, 273-291, 330-353, 369-395, 417-439, and 517-535; these read IFAS…FHVA, LYTG…LHLQ, LNHH…HVAI, MAHH…GHMY, IHFQ…QHMY, AALY…IFFI, AIIS…LYVH, and FLVH…LILV. The [4Fe-4S] cluster site is built by Cys-559 and Cys-568. 2 consecutive transmembrane segments (helical) span residues 575–596 and 643–665; these read AFYL…YWHW and LSVW…MFLI. Residues His-654, Met-662, and Tyr-670 each coordinate chlorophyll a. Trp-671 serves as a coordination point for phylloquinone. A helical membrane pass occupies residues 707–727; sequence LVGLAHFSVGYIFTYAAFLIA.

It belongs to the PsaA/PsaB family. As to quaternary structure, the PsaA/B heterodimer binds the P700 chlorophyll special pair and subsequent electron acceptors. PSI consists of a core antenna complex that captures photons, and an electron transfer chain that converts photonic excitation into a charge separation. The eukaryotic PSI reaction center is composed of at least 11 subunits. Requires P700 is a chlorophyll a/chlorophyll a' dimer, A0 is one or more chlorophyll a, A1 is one or both phylloquinones and FX is a shared 4Fe-4S iron-sulfur center. as cofactor.

It is found in the plastid. Its subcellular location is the chloroplast thylakoid membrane. It catalyses the reaction reduced [plastocyanin] + hnu + oxidized [2Fe-2S]-[ferredoxin] = oxidized [plastocyanin] + reduced [2Fe-2S]-[ferredoxin]. Its function is as follows. PsaA and PsaB bind P700, the primary electron donor of photosystem I (PSI), as well as the electron acceptors A0, A1 and FX. PSI is a plastocyanin-ferredoxin oxidoreductase, converting photonic excitation into a charge separation, which transfers an electron from the donor P700 chlorophyll pair to the spectroscopically characterized acceptors A0, A1, FX, FA and FB in turn. Oxidized P700 is reduced on the lumenal side of the thylakoid membrane by plastocyanin. The sequence is that of Photosystem I P700 chlorophyll a apoprotein A2 from Hordeum vulgare (Barley).